Here is a 523-residue protein sequence, read N- to C-terminus: Tryptamine 5-hydroxylase (523 aa).

A helical membrane pass occupies residues 5–25; the sequence is MASTMSLALLVLSAAYVLVAL. Cysteine 453 provides a ligand contact to heme.

It belongs to the cytochrome P450 family. Heme serves as cofactor.

The protein resides in the endoplasmic reticulum membrane. The enzyme catalyses tryptamine + reduced [NADPH--hemoprotein reductase] + O2 = serotonin + oxidized [NADPH--hemoprotein reductase] + H2O + H(+). In terms of biological role, involved in serotonin biosynthesis. Catalyzes the conversion of tryptamine to serotonin. Accumulation of serotonin may play a role in innate immunity. This chain is Tryptamine 5-hydroxylase, found in Oryza sativa subsp. japonica (Rice).